The chain runs to 197 residues: Ubiquitin-conjugating enzyme E2 T (197 aa).

Positions 2–152 (QRASRLKREL…ARQWTEKHAR (151 aa)) constitute a UBC core domain. Residue Cys-86 is the Glycyl thioester intermediate of the active site. Residues Lys-91 and Lys-182 each participate in a glycyl lysine isopeptide (Lys-Gly) (interchain with G-Cter in ubiquitin) cross-link. Residues 149-197 (KHARQKQKADEEEMLDNLPEAGDSRVHNSTQKRKASQLVGIEKKFHPDV) are disordered. Residue Ser-184 is modified to Phosphoserine. Residues Lys-191 and Lys-192 each participate in a glycyl lysine isopeptide (Lys-Gly) (interchain with G-Cter in SUMO2) cross-link.

This sequence belongs to the ubiquitin-conjugating enzyme family. In terms of assembly, directly interacts with FANCL. Interacts with BRCA1. In terms of processing, auto-ubiquitinated. Effects of auto-monoubiquitination at Lys-91 and Lys-182 are unclear: according to a report, monoubiquitination inactivates E2 enzyme activity. In contrast, according to another report, autoubiquitination does not affect E2 enzyme activity.

It localises to the nucleus. It carries out the reaction S-ubiquitinyl-[E1 ubiquitin-activating enzyme]-L-cysteine + [E2 ubiquitin-conjugating enzyme]-L-cysteine = [E1 ubiquitin-activating enzyme]-L-cysteine + S-ubiquitinyl-[E2 ubiquitin-conjugating enzyme]-L-cysteine.. The protein operates within protein modification; protein ubiquitination. Its function is as follows. Accepts ubiquitin from the E1 complex and catalyzes its covalent attachment to other proteins. Catalyzes monoubiquitination. Involved in mitomycin-C (MMC)-induced DNA repair. Acts as a specific E2 ubiquitin-conjugating enzyme for the Fanconi anemia complex by associating with E3 ubiquitin-protein ligase FANCL and catalyzing monoubiquitination of FANCD2, a key step in the DNA damage pathway. Also mediates monoubiquitination of FANCL and FANCI. May contribute to ubiquitination and degradation of BRCA1. In vitro able to promote polyubiquitination using all 7 ubiquitin Lys residues, but may prefer 'Lys-11'-, 'Lys-27'-, 'Lys-48'- and 'Lys-63'-linked polyubiquitination. This Homo sapiens (Human) protein is Ubiquitin-conjugating enzyme E2 T (UBE2T).